The primary structure comprises 134 residues: Probable salivary secreted peptide (134 aa).

An N-terminal signal peptide occupies residues 1-24; it reads MGAQKTIAYLAIIAIAVIFAQVNT.

It is found in the secreted. The protein is Probable salivary secreted peptide of Bombus ignitus (Bumblebee).